Consider the following 455-residue polypeptide: Bifunctional protein GlmU (455 aa).

Residues 1-229 form a pyrophosphorylase region; the sequence is MLNSAMSVVI…ISETEGVNNR (229 aa). UDP-N-acetyl-alpha-D-glucosamine-binding positions include 11–14, Lys-25, Gln-76, 81–82, 103–105, Gly-140, Glu-154, Asn-169, and Asn-227; these read LAAG, GT, and YGD. Position 105 (Asp-105) interacts with Mg(2+). Asn-227 contacts Mg(2+). The tract at residues 230 to 250 is linker; the sequence is LQLSRLERIYQAEQAEKLLLA. Residues 251 to 455 are N-acetyltransferase; it reads GVMLRDPARF…KQGWQRPVKK (205 aa). Positions 333 and 351 each coordinate UDP-N-acetyl-alpha-D-glucosamine. Residue His-363 is the Proton acceptor of the active site. 2 residues coordinate UDP-N-acetyl-alpha-D-glucosamine: Tyr-366 and Asn-377. Acetyl-CoA is bound by residues Ala-380, 386-387, Ser-405, Ala-423, and Arg-440; that span reads NY.

It in the N-terminal section; belongs to the N-acetylglucosamine-1-phosphate uridyltransferase family. This sequence in the C-terminal section; belongs to the transferase hexapeptide repeat family. In terms of assembly, homotrimer. Mg(2+) serves as cofactor.

It is found in the cytoplasm. It carries out the reaction alpha-D-glucosamine 1-phosphate + acetyl-CoA = N-acetyl-alpha-D-glucosamine 1-phosphate + CoA + H(+). The catalysed reaction is N-acetyl-alpha-D-glucosamine 1-phosphate + UTP + H(+) = UDP-N-acetyl-alpha-D-glucosamine + diphosphate. The protein operates within nucleotide-sugar biosynthesis; UDP-N-acetyl-alpha-D-glucosamine biosynthesis; N-acetyl-alpha-D-glucosamine 1-phosphate from alpha-D-glucosamine 6-phosphate (route II): step 2/2. Its pathway is nucleotide-sugar biosynthesis; UDP-N-acetyl-alpha-D-glucosamine biosynthesis; UDP-N-acetyl-alpha-D-glucosamine from N-acetyl-alpha-D-glucosamine 1-phosphate: step 1/1. It participates in bacterial outer membrane biogenesis; LPS lipid A biosynthesis. Catalyzes the last two sequential reactions in the de novo biosynthetic pathway for UDP-N-acetylglucosamine (UDP-GlcNAc). The C-terminal domain catalyzes the transfer of acetyl group from acetyl coenzyme A to glucosamine-1-phosphate (GlcN-1-P) to produce N-acetylglucosamine-1-phosphate (GlcNAc-1-P), which is converted into UDP-GlcNAc by the transfer of uridine 5-monophosphate (from uridine 5-triphosphate), a reaction catalyzed by the N-terminal domain. This is Bifunctional protein GlmU from Salmonella arizonae (strain ATCC BAA-731 / CDC346-86 / RSK2980).